The following is a 95-amino-acid chain: uncharacterized protein (95 aa).

An N-terminal signal peptide occupies residues 1 to 22 (MLPGFTMIITSLLLTFFREVEH). The Extracellular portion of the chain corresponds to 23–52 (LLPECLTITNTPQRTLVLIQRFTLLQKVMT). Residues 53 to 69 (IHLLLSIGTLGSLFTLH) form a helical membrane-spanning segment. Over 70-95 (PQLLKTNLLQKLHKELNSNLDYLISC) the chain is Cytoplasmic.

The protein localises to the host membrane. This is an uncharacterized protein from Acidianus bottle-shaped virus (isolate Italy/Pozzuoli) (ABV).